A 383-amino-acid chain; its full sequence is Acetylornithine deacetylase (383 aa).

Histidine 80 serves as a coordination point for Zn(2+). The active site involves aspartate 82. Aspartate 112 is a Zn(2+) binding site. The active site involves glutamate 144. Positions 145, 169, and 355 each coordinate Zn(2+).

This sequence belongs to the peptidase M20A family. ArgE subfamily. As to quaternary structure, homodimer. The cofactor is Zn(2+). It depends on Co(2+) as a cofactor. Requires glutathione as cofactor.

It localises to the cytoplasm. The enzyme catalyses N(2)-acetyl-L-ornithine + H2O = L-ornithine + acetate. It functions in the pathway amino-acid biosynthesis; L-arginine biosynthesis; L-ornithine from N(2)-acetyl-L-ornithine (linear): step 1/1. Its function is as follows. Catalyzes the hydrolysis of the amide bond of N(2)-acetylated L-amino acids. Cleaves the acetyl group from N-acetyl-L-ornithine to form L-ornithine, an intermediate in L-arginine biosynthesis pathway, and a branchpoint in the synthesis of polyamines. The sequence is that of Acetylornithine deacetylase from Salmonella typhi.